The chain runs to 477 residues: Glutamyl-tRNA reductase (477 aa).

Substrate is bound by residues 49–52 (TCNR), S109, 114–116 (EGQ), and Q120. The Nucleophile role is filled by C50. An NADP(+)-binding site is contributed by 221–226 (GAGSMS).

It belongs to the glutamyl-tRNA reductase family. In terms of assembly, homodimer.

It catalyses the reaction (S)-4-amino-5-oxopentanoate + tRNA(Glu) + NADP(+) = L-glutamyl-tRNA(Glu) + NADPH + H(+). The protein operates within porphyrin-containing compound metabolism; protoporphyrin-IX biosynthesis; 5-aminolevulinate from L-glutamyl-tRNA(Glu): step 1/2. Its function is as follows. Catalyzes the NADPH-dependent reduction of glutamyl-tRNA(Glu) to glutamate 1-semialdehyde (GSA). The protein is Glutamyl-tRNA reductase of Thermobifida fusca (strain YX).